An 82-amino-acid polypeptide reads, in one-letter code: Chlorosome protein E (82 aa).

Position 26 (H26) interacts with a bacteriochlorophyll c. Residues 55–82 are disordered; that stretch reads GSSGLKGSSPKYSGYATPSKEVKSRFEK. The segment covering 59–69 has biased composition (low complexity); it reads LKGSSPKYSGY.

It belongs to the BChl C/E-binding protein family.

Its subcellular location is the chlorosome. The protein resides in the chlorosome envelope. In terms of biological role, component of the photosynthetic apparatus. The light harvesting B740 complex binds bacteriochlorophyll c. The protein is Chlorosome protein E (csmE) of Chlorobaculum tepidum (strain ATCC 49652 / DSM 12025 / NBRC 103806 / TLS) (Chlorobium tepidum).